The sequence spans 497 residues: Probable FAD-binding monooxygenase AlmA (497 aa).

A helical membrane pass occupies residues 4–24 (QVDVLIIGAGISGIGLAVHLS). The FAD site is built by Ser15, Glu36, Asp56, Phe62, and Val104. Residue 54–56 (RSD) coordinates NADP(+). NADP(+) is bound by residues 184–190 (SGATAIT), 208–209 (RS), and 292–293 (RL). Val395 serves as a coordination point for FAD.

The protein belongs to the FAD-binding monooxygenase family. FAD serves as cofactor.

It is found in the cell membrane. It participates in hydrocarbon metabolism; alkane degradation. In terms of biological role, is involved in the degradation of n-alkanes with C chain lengths of 32 and longer. Allows Acinetobacter sp. strain DSM 17874 to grow on long-chain n-alkanes such as dotriacontane (C32H66) or hexatriacontane (C36H74) as a sole carbon source. This chain is Probable FAD-binding monooxygenase AlmA, found in Acinetobacter sp.